The chain runs to 131 residues: Histone H2A type 1-A (131 aa).

The interval M1–G23 is disordered. The residue at position 2 (S2) is an N-acetylserine. The residue at position 2 (S2) is a Phosphoserine; by RPS6KA5. R4 bears the Citrulline; alternate mark. R4 carries the symmetric dimethylarginine; by PRMT5; alternate modification. K6 is modified (N6-(2-hydroxyisobutyryl)lysine). Over residues Q7–S19 the composition is skewed to basic residues. At K10 the chain carries N6-(2-hydroxyisobutyryl)lysine; alternate. The residue at position 10 (K10) is an N6-(beta-hydroxybutyryl)lysine; alternate. K10 is modified (N6-lactoyllysine; alternate). The residue at position 10 (K10) is an N6-succinyllysine; alternate. N6-(beta-hydroxybutyryl)lysine is present on K14. Glycyl lysine isopeptide (Lys-Gly) (interchain with G-Cter in ubiquitin) cross-links involve residues K14 and K16. At K37 the chain carries N6-(2-hydroxyisobutyryl)lysine; alternate. K37 is modified (N6-(beta-hydroxybutyryl)lysine; alternate). The residue at position 37 (K37) is an N6-crotonyllysine; alternate. An N6-(2-hydroxyisobutyryl)lysine mark is found at K75 and K76. K96 carries the post-translational modification N6-(2-hydroxyisobutyryl)lysine; alternate. The residue at position 96 (K96) is an N6-(beta-hydroxybutyryl)lysine; alternate. N6-succinyllysine; alternate is present on K96. K96 is subject to N6-glutaryllysine; alternate. Q105 bears the N5-methylglutamine mark. K119 carries the post-translational modification N6-(2-hydroxyisobutyryl)lysine; alternate. At K119 the chain carries N6-(beta-hydroxybutyryl)lysine; alternate. An N6-crotonyllysine; alternate mark is found at K119 and K120. Residues K119 and K120 each carry the N6-glutaryllysine; alternate modification. K120 participates in a covalent cross-link: Glycyl lysine isopeptide (Lys-Gly) (interchain with G-Cter in ubiquitin); alternate. At T121 the chain carries Phosphothreonine; by DCAF1. K127 bears the N6-crotonyllysine mark.

It belongs to the histone H2A family. The nucleosome is a histone octamer containing two molecules each of H2A, H2B, H3 and H4 assembled in one H3-H4 heterotetramer and two H2A-H2B heterodimers. The octamer wraps approximately 147 bp of DNA. Post-translationally, deiminated on Arg-4 in granulocytes upon calcium entry. In terms of processing, monoubiquitination of Lys-120 (H2AK119Ub) by RING1, TRIM37 and RNF2/RING2 complex gives a specific tag for epigenetic transcriptional repression and participates in X chromosome inactivation of female mammals. It is involved in the initiation of both imprinted and random X inactivation. Ubiquitinated H2A is enriched in inactive X chromosome chromatin. Ubiquitination of H2A functions downstream of methylation of 'Lys-27' of histone H3 (H3K27me). H2AK119Ub by RNF2/RING2 can also be induced by ultraviolet and may be involved in DNA repair. Monoubiquitination of Lys-120 (H2AK119Ub) by TRIM37 may promote transformation of cells in a number of breast cancers. Following DNA double-strand breaks (DSBs), it is ubiquitinated through 'Lys-63' linkage of ubiquitin moieties by the E2 ligase UBE2N and the E3 ligases RNF8 and RNF168, leading to the recruitment of repair proteins to sites of DNA damage. Ubiquitination at Lys-14 and Lys-16 (H2AK13Ub and H2AK15Ub, respectively) in response to DNA damage is initiated by RNF168 that mediates monoubiquitination at these 2 sites, and 'Lys-63'-linked ubiquitin are then conjugated to monoubiquitin; RNF8 is able to extend 'Lys-63'-linked ubiquitin chains in vitro. Deubiquitinated by USP51 at Lys-14 and Lys-16 (H2AK13Ub and H2AK15Ub, respectively) after damaged DNA is repaired. H2AK119Ub and ionizing radiation-induced 'Lys-63'-linked ubiquitination (H2AK13Ub and H2AK15Ub) are distinct events. Phosphorylation on Ser-2 (H2AS1ph) is enhanced during mitosis. Phosphorylation on Ser-2 by RPS6KA5/MSK1 directly represses transcription. Acetylation of H3 inhibits Ser-2 phosphorylation by RPS6KA5/MSK1. Phosphorylation at Thr-121 (H2AT120ph) by DCAF1 is present in the regulatory region of many tumor suppresor genes and down-regulates their transcription. Post-translationally, glutamine methylation at Gln-105 (H2AQ104me) by FBL is specifically dedicated to polymerase I. It is present at 35S ribosomal DNA locus and impairs binding of the FACT complex. In terms of processing, symmetric dimethylation on Arg-4 by the PRDM1/PRMT5 complex may play a crucial role in the germ-cell lineage. Crotonylation (Kcr) is specifically present in male germ cells and marks testis-specific genes in post-meiotic cells, including X-linked genes that escape sex chromosome inactivation in haploid cells. Crotonylation marks active promoters and enhancers and confers resistance to transcriptional repressors. It is also associated with post-meiotically activated genes on autosomes. Post-translationally, lactylated in macrophages by EP300/P300 by using lactoyl-CoA directly derived from endogenous or exogenous lactate, leading to stimulates gene transcription.

It is found in the nucleus. The protein resides in the chromosome. Core component of nucleosome. Nucleosomes wrap and compact DNA into chromatin, limiting DNA accessibility to the cellular machineries which require DNA as a template. Histones thereby play a central role in transcription regulation, DNA repair, DNA replication and chromosomal stability. DNA accessibility is regulated via a complex set of post-translational modifications of histones, also called histone code, and nucleosome remodeling. This is Histone H2A type 1-A from Homo sapiens (Human).